A 193-amino-acid polypeptide reads, in one-letter code: MNGMAVVMIIRKYFLIIALLVMPWLAIPSVSAADKGGFNTFTDNVAETWRQPEHYDLYVPAITWHARFAYDKEKTDRYNERPWGVGFGQSRWDDKGNWHGLYMMAFKDSFNKWEPIGGYGWEKTWRPLEDDNFRLGLGFTAGVTARDNWNYIPIPVLLPLASIGYGPATFQMTYIPGSYNNGNVYFAWMRFQF.

A signal peptide spans 1 to 32; it reads MNGMAVVMIIRKYFLIIALLVMPWLAIPSVSA. Catalysis depends on residues His65, Asp108, and Ser109.

It belongs to the lipid A palmitoyltransferase family. In terms of assembly, homodimer.

It localises to the cell outer membrane. It catalyses the reaction a lipid A + a 1,2-diacyl-sn-glycero-3-phosphocholine = a hepta-acyl lipid A + a 2-acyl-sn-glycero-3-phosphocholine. It carries out the reaction a lipid IVA + a 1,2-diacyl-sn-glycero-3-phosphocholine = a lipid IVB + a 2-acyl-sn-glycero-3-phosphocholine. The catalysed reaction is a lipid IIA + a 1,2-diacyl-sn-glycero-3-phosphocholine = a lipid IIB + a 2-acyl-sn-glycero-3-phosphocholine. Transfers a fatty acid residue from the sn-1 position of a phospholipid to the N-linked hydroxyfatty acid chain on the proximal unit of lipid A or its precursors. The polypeptide is Lipid A acyltransferase PagP (Salmonella paratyphi C (strain RKS4594)).